A 495-amino-acid chain; its full sequence is Transcription termination/antitermination protein NusA (495 aa).

Residues Gly-135–Ser-200 form the S1 motif domain. The region spanning His-302–Ile-370 is the KH domain. 2 consecutive repeat copies span residues Asn-364–Leu-414 and Gly-439–Cys-489. Residues Asn-364–Cys-489 form a 2 X 51 AA approximate repeats region.

Belongs to the NusA family. As to quaternary structure, monomer. Binds directly to the core enzyme of the DNA-dependent RNA polymerase and to nascent RNA.

It localises to the cytoplasm. Participates in both transcription termination and antitermination. In Buchnera aphidicola subsp. Schizaphis graminum (strain Sg), this protein is Transcription termination/antitermination protein NusA.